A 994-amino-acid polypeptide reads, in one-letter code: Sarcoplasmic/endoplasmic reticulum calcium ATPase 1 (994 aa).

At 1–48 (MENAHAKTAEECLAFFGVNESVGLSGEQVRRALEKYGHNELPAEEGKT) the chain is on the cytoplasmic side. A helical transmembrane segment spans residues 49 to 69 (IWELVVEQFEDLLVRILLLAA). The Lumenal segment spans residues 70–89 (CISFVLAWFEEGEETITAFV). Residues 90–110 (EPFVILLILIANAVVGVWQER) form a helical membrane-spanning segment. Residues 111-253 (NAENAIEALK…QDKTPLQQKL (143 aa)) are Cytoplasmic-facing. Residues 254-273 (DEFGEQLSKVISLICVAVWL) form a helical membrane-spanning segment. The Lumenal segment spans residues 274 to 295 (INIGHFNDPVHGGSWIRGAIYY). A helical transmembrane segment spans residues 296 to 313 (FKIAVALAVAAIPEGLPA). Ca(2+) is bound by residues valine 304, alanine 305, isoleucine 307, and glutamate 309. Residues 314–757 (VITTCLALGT…EEGRAIYNNM (444 aa)) are Cytoplasmic-facing. Catalysis depends on aspartate 351, which acts as the 4-aspartylphosphate intermediate. The Mg(2+) site is built by aspartate 351 and threonine 353. Threonine 353, glutamate 442, arginine 489, lysine 515, arginine 560, threonine 625, glycine 626, aspartate 627, arginine 678, and lysine 684 together coordinate ATP. Aspartate 703 is a binding site for Mg(2+). ATP is bound at residue asparagine 706. The helical transmembrane segment at 758 to 777 (KQFIRYLISSNVGEVVCIFL) threads the bilayer. Residues asparagine 768 and glutamate 771 each coordinate Ca(2+). The Lumenal portion of the chain corresponds to 778–787 (TAALGLPEAL). The helical transmembrane segment at 788–808 (IPVQLLWVNLVTDGLPATALG) threads the bilayer. Residues 788-808 (IPVQLLWVNLVTDGLPATALG) form an interaction with PLN region. Residues asparagine 796, threonine 799, and aspartate 800 each coordinate Ca(2+). Over 809–828 (FNPPDLDIMDKPPRSPKEPL) the chain is Cytoplasmic. The helical transmembrane segment at 829–851 (ISGWLFFRYLAIGGYVGAATVGA) threads the bilayer. Topologically, residues 852-897 (AAWWFLYAEDGPSLTYHQLTHFMQCTHHNAEFEGVDCDIFESPVPM) are lumenal. Cysteine 876 and cysteine 888 are joined by a disulfide. The chain crosses the membrane as a helical span at residues 898–917 (TMALSVLVTIEMCNALNSLS). Glutamate 908 provides a ligand contact to Ca(2+). Residues 918 to 930 (ENQSLLRMPPWVN) are Cytoplasmic-facing. Residues 931 to 949 (IWLVGSICLSMSLHFVILY) traverse the membrane as a helical segment. The interaction with PLN stretch occupies residues 932 to 943 (WLVGSICLSMSL). Topologically, residues 950–964 (VDPLPMIFKLTHLDL) are lumenal. A helical membrane pass occupies residues 965–985 (AHWLVVLRISFPVILLDEALK). Residues 986–994 (FVARNYLEA) are Cytoplasmic-facing.

The protein belongs to the cation transport ATPase (P-type) (TC 3.A.3) family. Type IIA subfamily. Interacts with sarcolipin (SLN). Interacts with phospholamban (PLN). Interacts with myoregulin (MRLN). Interacts with DWORF. The cofactor is Mg(2+).

It is found in the endoplasmic reticulum membrane. It localises to the sarcoplasmic reticulum membrane. The enzyme catalyses Ca(2+)(in) + ATP + H2O = Ca(2+)(out) + ADP + phosphate + H(+). Its activity is regulated as follows. Inhibited by sarcolipin (SLN) and myoregulin (MRLN). Also shown to be inhibited by phospholamban (PLN) in vitro. Enhanced by DWORF; DWORF increases activity by displacing sarcolipin (SLN), phospholamban (PLN) and myoregulin (MRLN). Key regulator of striated muscle performance by acting as the major Ca(2+) ATPase responsible for the reuptake of cytosolic Ca(2+) into the sarcoplasmic reticulum. Catalyzes the hydrolysis of ATP coupled with the translocation of calcium from the cytosol to the sarcoplasmic reticulum lumen. Contributes to calcium sequestration involved in muscular excitation/contraction. This Gallus gallus (Chicken) protein is Sarcoplasmic/endoplasmic reticulum calcium ATPase 1 (ATP2A1).